We begin with the raw amino-acid sequence, 186 residues long: Shikimate kinase (186 aa).

15–20 (GAGKTT) is a binding site for ATP. Position 19 (Thr-19) interacts with Mg(2+). Substrate contacts are provided by Asp-37, Arg-61, and Gly-83. Position 121 (Arg-121) interacts with ATP. Arg-140 lines the substrate pocket.

The protein belongs to the shikimate kinase family. Monomer. Mg(2+) serves as cofactor.

It localises to the cytoplasm. It catalyses the reaction shikimate + ATP = 3-phosphoshikimate + ADP + H(+). It functions in the pathway metabolic intermediate biosynthesis; chorismate biosynthesis; chorismate from D-erythrose 4-phosphate and phosphoenolpyruvate: step 5/7. In terms of biological role, catalyzes the specific phosphorylation of the 3-hydroxyl group of shikimic acid using ATP as a cosubstrate. The chain is Shikimate kinase from Psychrobacter arcticus (strain DSM 17307 / VKM B-2377 / 273-4).